The primary structure comprises 753 residues: Nibrin (753 aa).

In terms of domain architecture, FHA spans 22-81 (YVVGRKNCAFLIQDDQSISRSHAVLTVSRPETTHSQSVSVPVLTIKDTSKYGTFVNGSKL). BRCT domains are found at residues 101-191 (SKFR…PTPE) and 221-311 (GKTF…LAVI). A Phosphoserine modification is found at S274. S343 bears the Phosphoserine; by ATM mark. The tract at residues 442 to 606 (RECTPRQQSN…NTKQREENEM (165 aa)) is disordered. Residues 446 to 455 (PRQQSNSITN) show a composition bias toward polar residues. The Nuclear localization signal signature appears at 461–467 (RKRERAE). The segment covering 490-500 (CTESSASSAWN) has biased composition (polar residues). Over residues 517 to 528 (ESGELASDKTDI) the composition is skewed to basic and acidic residues. Residues 568–577 (QTANGDQEAQ) are compositionally biased toward polar residues. Over residues 585–606 (CLETKGSRTEEGNTKQREENEM) the composition is skewed to basic and acidic residues. The FxF/Y motif motif lies at 739–748 (ADDLFRYDPN).

Belongs to the Nibrin family. Component of the MRN complex composed of two heterodimers RAD50 and mre11 associated with a single NBN.

It localises to the nucleus. The protein resides in the chromosome. Its subcellular location is the PML body. It is found in the telomere. Component of the MRN complex, which plays a central role in double-strand break (DSB) repair, DNA recombination, maintenance of telomere integrity and meiosis. The MRN complex is involved in the repair of DNA double-strand breaks (DSBs) via homologous recombination (HR), an error-free mechanism which primarily occurs during S and G2 phases. The complex (1) mediates the end resection of damaged DNA, which generates proper single-stranded DNA, a key initial steps in HR, and is (2) required for the recruitment of other repair factors and efficient activation of ATM and ATR upon DNA damage. The MRN complex possesses single-strand endonuclease activity and double-strand-specific 3'-5' exonuclease activity, which are provided by MRE11, to initiate end resection, which is required for single-strand invasion and recombination. Within the MRN complex, NBN acts as a protein-protein adapter, which specifically recognizes and binds phosphorylated proteins, promoting their recruitment to DNA damage sites. Recruits MRE11 and RAD50 components of the MRN complex to DSBs in response to DNA damage. Promotes the recruitment of PI3/PI4-kinase family members ATM, ATR, and probably DNA-PKcs to the DNA damage sites, activating their functions. Mediates the recruitment of phosphorylated RBBP8/CtIP to DSBs, leading to cooperation between the MRN complex and RBBP8/CtIP to initiate end resection. The MRN complex and rbbp8/CtIP are also required for chromosome alignment during metaphase. In Gallus gallus (Chicken), this protein is Nibrin (NBN).